A 320-amino-acid chain; its full sequence is Ferrochelatase (320 aa).

Fe cation-binding residues include histidine 194 and glutamate 275.

The protein belongs to the ferrochelatase family. In terms of assembly, monomer.

The protein localises to the cytoplasm. It catalyses the reaction heme b + 2 H(+) = protoporphyrin IX + Fe(2+). Its pathway is porphyrin-containing compound metabolism; protoheme biosynthesis; protoheme from protoporphyrin-IX: step 1/1. In terms of biological role, catalyzes the ferrous insertion into protoporphyrin IX. The sequence is that of Ferrochelatase from Escherichia coli (strain 55989 / EAEC).